Here is a 673-residue protein sequence, read N- to C-terminus: RAS guanyl-releasing protein 4 (673 aa).

Basic residues-rich tracts occupy residues 1–10 (MNRKDSKRKS) and 20–32 (GRGRPRQARRHKT). Disordered stretches follow at residues 1 to 34 (MNRKDSKRKSHQECPVKTGGRGRPRQARRHKTCP) and 162 to 188 (QSLGDFSSRLSPGGPGPPHPMSSPGLG). The N-terminal Ras-GEF domain occupies 49-172 (GMLNEGGCSE…SLGDFSSRLS (124 aa)). The 232-residue stretch at 201 to 432 (ETGELAEHLT…YELSYAREPR (232 aa)) folds into the Ras-GEF domain. The EF-hand domain maps to 466-501 (HVEQLVESVFKNYDPDGRGTISQEDFERLSGNFPFA). The Phorbol-ester/DAG-type zinc finger occupies 540 to 590 (LHTFQEVTFRKPTFCNSCSGFLWGVTKQGYRCRDCGLCCHRHCRDQVKVEC). Disordered regions lie at residues 593–618 (RPGAKGDASPPEAPVPPTPVPQASCG) and 638–673 (RHAWTQTESPHPSWEPETVPLPAKASPPTESSKLNS). The span at 603-612 (PEAPVPPTPV) shows a compositional bias: pro residues.

Belongs to the RASGRP family.

The protein localises to the cytoplasm. The protein resides in the cell membrane. In terms of biological role, functions as a cation- and diacylglycerol (DAG)-regulated nucleotide exchange factor activating Ras through the exchange of bound GDP for GTP. In neutrophils, participates in a phospholipase C-activating N-formyl peptide-activated GPCR (G protein-coupled receptor) signaling pathway by promoting Ras-mediated activation of PIK3CG/PI3Kgamma to promote neutrophil functional responses. In CD117(+) dendritic cells and mast cells, participates in an lipopolysaccharide (LPS)-activated signaling pathway that stimulates the production of interferon-gamma and other pro-inflammatory cytokines by natural killer (NK) cells. May function in mast cell differentiation. Does not appear to be required for the development of B-cells, DC-cells, T-cells, or NK-cells. This is RAS guanyl-releasing protein 4 (RASGRP4) from Bos taurus (Bovine).